A 546-amino-acid polypeptide reads, in one-letter code: Amidase FG08078 (546 aa).

Catalysis depends on charge relay system residues Lys129 and Ser204. Ser228 serves as the catalytic Acyl-ester intermediate.

Belongs to the amidase family.

It participates in mycotoxin biosynthesis. Amidase; part of the gene cluster that mediates the biosynthesis of butenolide, a mycotoxin that shows antibiotic activity but does not seem to play a major role in the spread of head blight in wheat. Butenolide is derived from glutamic acid via a 4-acetamido-2-butenoic acid intermediate. The predicted function of the NADH:flavin oxidoreductase FG08077, the cytochrome P450 monooxygenase FG08079, the decarboxylase FG08083, and the putative acetyltransferase FG08082 are consistent with this pathway, however, the respective activities of the butelonide biosynthesis cluster enzymes have still to be experimentally determined. In Gibberella zeae (strain ATCC MYA-4620 / CBS 123657 / FGSC 9075 / NRRL 31084 / PH-1) (Wheat head blight fungus), this protein is Amidase FG08078.